We begin with the raw amino-acid sequence, 341 residues long: Major histocompatibility complex class I-related protein 1 (341 aa).

Residues 1–22 form the signal peptide; it reads MGELMAFLLPLIIVLMVKHSDS. The interval 23–109 is alpha-1; the sequence is RTHSLRYFRL…KRLQRHYNHS (87 aa). An antigen-binding cleft region spans residues 23-201; sequence RTHSLRYFRL…EYGKDILQRT (179 aa). Topologically, residues 23–302 are extracellular; that stretch reads RTHSLRYFRL…QESETIPLVM (280 aa). 8-(9H-purin-6-yl)-2-oxa-8-azabicyclo[3.3.1]nona-3,6-diene-4,6-dicarbaldehyde-binding residues include Tyr-29 and Arg-31. Residues Arg-31, Ser-46, and Lys-65 each contribute to the 5-(2-oxoethylideneamino)-6-(D-ribitylamino)uracil site. Positions 31, 46, and 65 each coordinate 5-(2-oxopropylideneamino)-6-(D-ribitylamino)uracil. 7-hydroxy-6-methyl-8-(1-D-ribityl)lumazine is bound by residues Arg-31, Ser-46, and Lys-65. Residues Lys-65 and His-80 each coordinate 8-(9H-purin-6-yl)-2-oxa-8-azabicyclo[3.3.1]nona-3,6-diene-4,6-dicarbaldehyde. Lys-65 serves as a coordination point for 2-amino-4-oxopteridine-6-carbaldehyde. Lys-65 serves as a coordination point for pyridoxal. N-linked (GlcNAc...) asparagine glycosylation is present at Asn-107. Positions 110 to 201 are alpha-2; it reads GSHTYQRMIG…EYGKDILQRT (92 aa). An 8-(9H-purin-6-yl)-2-oxa-8-azabicyclo[3.3.1]nona-3,6-diene-4,6-dicarbaldehyde-binding site is contributed by Arg-116. Positions 116, 174, and 175 each coordinate 5-(2-oxoethylideneamino)-6-(D-ribitylamino)uracil. 5-(2-oxopropylideneamino)-6-(D-ribitylamino)uracil contacts are provided by Arg-116, Tyr-174, and Gln-175. 7-hydroxy-6-methyl-8-(1-D-ribityl)lumazine is bound by residues Arg-116, Tyr-174, and Gln-175. Disulfide bonds link Cys-120–Cys-183 and Cys-222–Cys-278. The alpha-3 stretch occupies residues 202–293; that stretch reads EPPLVRVNRK…GVHMVLQVPQ (92 aa). The 97-residue stretch at 203–299 folds into the Ig-like C1-type domain; sequence PPLVRVNRKE…QVPQESETIP (97 aa). Residues 294 to 302 form a connecting peptide region; sequence ESETIPLVM. Residues 303–323 traverse the membrane as a helical segment; sequence KAVSGSIVLVIVLAGVGVLVW. Over 324-341 the chain is Cytoplasmic; it reads RRRPREQNGAIYLPTPDR.

The protein belongs to the MHC class I family. In terms of assembly, heterotrimer that consists of MR1, B2M and metabolite antigen. Major classes of metabolite ligands presented by MR1 include riboflavin-related antigens, pyrimidines and ribityl lumazines, nucleobase adducts and folate derivatives. Forms reversible covalent Schiff base complexes with microbial pyrimidine-based metabolite, which serves as a molecular switch triggering complete folding, stable association with B2M and translocation of the ternary complex from endoplasmic reticulum to the plasma membrane. Alternatively, forms non-Schiff base complexes with ribityl lumazines. On antigen-presenting cells, the ternary complex interacts with TCR on MR1-restricted T cells. Interacts with TAPBP and TAPBPL chaperones in the endoplasmic reticulum. TAPBP associated or not with MHC class I peptide loading complex binds ligand-free MR1 or MR1-B2M complex, providing for stable MR1 pools ready for metabolite antigen processing. TAPBPL interacts with MR1 in a ligand-independent way; this interaction may stabilize MR1 pool and facilitate ligand loading and dissociation. Structurally, MR1-B2M heterodimer adopts a topology similar to classical MHC class I molecules, with alpha-1 and alpha-2 domains of MR1 forming the antigen-binding cleft composed of two alpha-helices resting on a floor of 7-stranded anti-parallel beta-pleated sheet. MR1-B2M heterodimer (via alpha-helices) interacts with TCR (via CDR domains). In terms of processing, N-glycosylated.

Its subcellular location is the cell membrane. The protein resides in the endoplasmic reticulum membrane. It is found in the golgi apparatus membrane. The protein localises to the early endosome membrane. It localises to the late endosome membrane. Antigen-presenting molecule specialized in displaying microbial pyrimidine-based metabolites to alpha-beta T cell receptors (TCR) on innate-type mucosal-associated invariant T (MAIT) cells. In complex with B2M preferentially presents riboflavin-derived metabolites to semi-invariant TCRs on MAIT cells, guiding immune surveillance of the microbial metabolome at mucosal epithelial barriers. Signature pyrimidine-based microbial antigens are generated via non-enzymatic condensation of metabolite intermediates of the riboflavin pathway with by-products arising from other metabolic pathways such as glycolysis. Typical potent antigenic metabolites are 5-(2-oxoethylideneamino)-6-D-ribitylaminouracil (5-OE-RU) and 5-(2-oxopropylideneamino)-6-D-ribitylaminouracil (5-OP-RU), products of condensation of 5-amino-6-D-ribityaminouracil (5-A-RU) with glyoxal or methylglyoxal by-products, respectively. May present microbial antigens to various MAIT cell subsets, providing for unique recognition of diverse microbes, including pathogens that do not synthesize riboflavin. Upon antigen recognition, elicits rapid innate-type MAIT cell activation to eliminate pathogenic microbes by directly killing infected cells. During T cell development, drives thymic selection and post-thymic terminal differentiation of MAIT cells in a process dependent on commensal microflora. Acts as an immune sensor of cancer cell metabolome. May present a tumor-specific or -associated metabolite essential for cancer cell survival to a pan-cancer TCR on a non-MAIT CD8-positive T cell clone, triggering T cell-mediated killing of a wide range of cancer cell types. May present tumor-enriched pyridoxal and pyridoxal 5'-phosphate antigens, enabling preferential recognition of cancer cells. Presents nucleobase carbonyl adducts generated during oxidative stress. Captures M3Ade, a nucleobase adduct composed of one adenine modified by a malondialdehyde trimer, for recognition by MR1-restricted T cell clones expressing a polyclonal TCR repertoire. The sequence is that of Major histocompatibility complex class I-related protein 1 from Pan troglodytes (Chimpanzee).